Reading from the N-terminus, the 427-residue chain is Peptidase B (427 aa).

2 residues coordinate Mn(2+): Lys-195 and Asp-200. Lys-207 is a catalytic residue. The Mn(2+) site is built by Asp-218, Asp-277, and Glu-279. Arg-281 is an active-site residue.

This sequence belongs to the peptidase M17 family. As to quaternary structure, homohexamer. Mn(2+) serves as cofactor.

Its subcellular location is the cytoplasm. The enzyme catalyses Release of an N-terminal amino acid, Xaa, from a peptide or arylamide. Xaa is preferably Glu or Asp but may be other amino acids, including Leu, Met, His, Cys and Gln.. Probably plays an important role in intracellular peptide degradation. This Shigella flexneri protein is Peptidase B.